The following is a 352-amino-acid chain: Chorismate synthase (352 aa).

NADP(+) is bound at residue R48. FMN contacts are provided by residues 125–127 (RSS), 238–239 (NA), G278, 293–297 (KPTSS), and R319.

The protein belongs to the chorismate synthase family. Homotetramer. FMNH2 is required as a cofactor.

It carries out the reaction 5-O-(1-carboxyvinyl)-3-phosphoshikimate = chorismate + phosphate. It functions in the pathway metabolic intermediate biosynthesis; chorismate biosynthesis; chorismate from D-erythrose 4-phosphate and phosphoenolpyruvate: step 7/7. Its function is as follows. Catalyzes the anti-1,4-elimination of the C-3 phosphate and the C-6 proR hydrogen from 5-enolpyruvylshikimate-3-phosphate (EPSP) to yield chorismate, which is the branch point compound that serves as the starting substrate for the three terminal pathways of aromatic amino acid biosynthesis. This reaction introduces a second double bond into the aromatic ring system. The chain is Chorismate synthase from Legionella pneumophila subsp. pneumophila (strain Philadelphia 1 / ATCC 33152 / DSM 7513).